The chain runs to 161 residues: S-ribosylhomocysteine lyase (161 aa).

Fe cation-binding residues include His-57, His-61, and Cys-124.

Belongs to the LuxS family. As to quaternary structure, homodimer. The cofactor is Fe cation.

It carries out the reaction S-(5-deoxy-D-ribos-5-yl)-L-homocysteine = (S)-4,5-dihydroxypentane-2,3-dione + L-homocysteine. In terms of biological role, involved in the synthesis of autoinducer 2 (AI-2) which is secreted by bacteria and is used to communicate both the cell density and the metabolic potential of the environment. The regulation of gene expression in response to changes in cell density is called quorum sensing. Catalyzes the transformation of S-ribosylhomocysteine (RHC) to homocysteine (HC) and 4,5-dihydroxy-2,3-pentadione (DPD). The sequence is that of S-ribosylhomocysteine lyase from Macrococcus caseolyticus (strain JCSC5402) (Macrococcoides caseolyticum).